We begin with the raw amino-acid sequence, 244 residues long: Aspartate/glutamate leucyltransferase (244 aa).

It belongs to the R-transferase family. Bpt subfamily.

The protein resides in the cytoplasm. It carries out the reaction N-terminal L-glutamyl-[protein] + L-leucyl-tRNA(Leu) = N-terminal L-leucyl-L-glutamyl-[protein] + tRNA(Leu) + H(+). The enzyme catalyses N-terminal L-aspartyl-[protein] + L-leucyl-tRNA(Leu) = N-terminal L-leucyl-L-aspartyl-[protein] + tRNA(Leu) + H(+). Functions in the N-end rule pathway of protein degradation where it conjugates Leu from its aminoacyl-tRNA to the N-termini of proteins containing an N-terminal aspartate or glutamate. This Paramagnetospirillum magneticum (strain ATCC 700264 / AMB-1) (Magnetospirillum magneticum) protein is Aspartate/glutamate leucyltransferase.